We begin with the raw amino-acid sequence, 147 residues long: Riboflavin kinase (147 aa).

15–20 provides a ligand contact to CDP; the sequence is GLGEGR. 2 residues coordinate Mg(2+): Thr44 and Asn46. Thr97 and Glu104 together coordinate FMN. Residue 109–112 participates in CDP binding; that stretch reads TELR.

Belongs to the archaeal riboflavin kinase family. Mg(2+) serves as cofactor.

It catalyses the reaction riboflavin + CTP = CDP + FMN + H(+). The protein operates within cofactor biosynthesis; FMN biosynthesis; FMN from riboflavin (CTP route): step 1/1. In terms of biological role, catalyzes the CTP-dependent phosphorylation of riboflavin (vitamin B2) to form flavin mononucleotide (FMN). The sequence is that of Riboflavin kinase from Methanopyrus kandleri (strain AV19 / DSM 6324 / JCM 9639 / NBRC 100938).